The following is a 1977-amino-acid chain: MAARSAPSCHLRLEWVYGYRGHQCRNNLYYTAAKEIVYFVAGVGVVYSPREHRQKFFRGHSDDIISLALHPERVLVATGQVGKEPYICVWDSYTVQTVSVLKDVHTHGIACLAFDLDGQRLVSVGLDSKNAVCVWDWKRGRMLSMAPGHTDRIFDISWDLYQPNKLVSCGVKHIKFWSLCGNALTPKRGVFGKTGDLQTILCLACARDELTYSGALNGDIYVWKGINLIRTIQGAHTAGIFSMNSCEEGFATGGRDGCIRLWDLTFKPITVIDLRETEQGYKGLSVRSVCWRGDHILVGTQDSEIFEIVVHERNKPFLIMQGHCEGELWALAVHPTKPLAVTGSDDRSVRIWSLVDHALIARCNMEEPIRCAAVNVDGIHLALGMKDGSFTVLRVRDMTEVVHIKDRKEAIHELKYSPDGAYLAVGCNDSSVDIYGVAQRYKKVGECVGSLSFITHLDWSSDSRYLQTNDGSGKRLLYKMPGGKEVTSKEEIKGMHWASWTCVAGLEVNGIWPKYSDINDINSVDGNYVGQVLVTADDYGVVKLFRYPCLRKGAKFRKYIGHSAHVTNVRWSHDYQWVISIGGADHSVFQWKFIPERKLKDALHIAPQESLAESNSDESDSDLSDVPELDSEIEQETQLTYHRQVYKEDLPQLKEQCKEKQKSATSKRRERTPGTSIRLHFIHGYRGYDCRSNLFYTQIGEIVYHVAAVGVIYNRQQNTQRFYLGHDDDILCLAIHPLKDYVATGQVGRDPSIHVWDTETIKPLSILKGYHQYGICAVDFSADGKRLASVGIDDSHTIVLWDWKKGEKLSVTRGSKDKIFVVKMNPYVPDKLITAGIKHMKFWRRAGGGLIGKKGYVGTLGKNDTMMCAVYGWTEEMAFSGTSTGDVCIWRDVFLVKTVKAHDGPVFSMHALEKGFVTGGKDGMVALWDDSFERCLKTYAIKRADLAPGSKGLLLEDNPSIRAISLGHGHILVGTKNGEILEVDKSGPITLLVQGHMEGEVWGLATHPYLPICATVSDDKTLRIWDLSPSHCMLAVRKLKKGGRCCCFSPDGKALAVGLNDGSFLMANADTLEDLVSFHHRKDIISDIRFSPGSGKYLAVASHDSFVDIYNVTSSKRVGVCKGATSYITHIDWDSRGKLLQVNTGAKEQLFFEAPRGKRQTIPSVEVEKISWATWTSVLGLCCEGIWPVIGEVTEVTASCLTSDKMVLATGDDLGFVKLFRYPAKGKFGKFKKYVAHSTHVTNVRWTYDDSMLVTLGGADMSLMVWTNEVESHREKKYCDSEESDIDSEEDGGYDSDVTRENEISYTIRALSTNIRPMFGVKPHLQQKEPSVDERQGVVRGSRPPVSRAPPQPEKLQSNNVGKKKRPIEDLVLELAFGYRGRDCRNNVHYLNDGDDIIYHTASIGILHNVATGTQSFYQEHNDDILCLTVNQHPKFINIVATGQVGDSADMSATAPSVHIWDAVNKQTLSILRCSHSKGVCSVSFSATGKLLLSVGLDPEHTVTIWRWQEGAKIASRGGHNQRIFVAEFRPDSDTQFVSVGIKHVKFWTLAGRALLSKKGLLSSLEDARMQTMLAVAFGANNLTFTGTISGDVCVWKDHILCRVVARAHNGPVFAMYTTLRDGLIVTGGKERPSKEGGAVKLWDQELRRCRAFRLETGQVTDCVRSVCRGKGKILVGTRNSEIIEVGEKNAACNILVNGHVDGPIWGLATHPSRDFFLSAAEDGTVRLWDIADKKMLNKVNLGHAARTVCYSPEGDMVAIGMKNGEFIILLVSSLKIWGKKRDRRCAIHDIRFSPDSRYLAVGSSENSVDFYDLTLGPTLNRISYCKDIPSFVIQMDFSADSRHLQVSSGCYKRHVYEVPSGKHLVDHAAIDRITWATWTSILGDEVMGIWSRHAEKADVTCACVSHSGISLVTGDDFGMVKLYDFPCPEKFAKHKRFLGHSPHVTNIRFTSGDRHVVSAGGDDCSLFVWKCVHMPH.

WD repeat units follow at residues 59–100, 104–145, 148–187, 195–233, 235–273, 280–321, 323–362, 406–445, 449–488, and 561–601; these read GHSD…TVSV, VHTH…MLSM, GHTDRIFDISWDLYQPNKLVSCGVKHIKFWSLCGNALTPK, GDLQTILCLACARDELTYSGALNGDIYVWKGINLIRTIQ, AHTAGIFSMNSCEEGFATGGRDGCIRLWDLTFKPITVID, GYKG…LIMQ, HCEGELWALAVHPTKPLAVTGSDDRSVRIWSLVDHALIAR, DRKEAIHELKYSPDGAYLAVGCNDSSVDIYGVAQRYKKVG, GSLSFITHLDWSSDSRYLQTNDGSGKRLLYKMPGGKEVTS, and GHSA…KLKD. The interval 609 to 629 is disordered; sequence ESLAESNSDESDSDLSDVPEL. Positions 615–629 are enriched in acidic residues; sequence NSDESDSDLSDVPEL. WD repeat units follow at residues 725–766, 770–811, 814–853, 861–900, 901–940, 996–1035, 1038–1077, 1080–1120, and 1236–1276; these read GHDD…PLSI, YHQY…KLSV, GSKDKIFVVKMNPYVPDKLITAGIKHMKFWRRAGGGLIGK, GKNDTMMCAVYGWTEEMAFSGTSTGDVCIWRDVFLVKTVK, AHDGPVFSMHALEKGFVTGGKDGMVALWDDSFERCLKTYA, HMEGEVWGLATHPYLPICATVSDDKTLRIWDLSPSHCMLA, KLKKGGRCCCFSPDGKALAVGLNDGSFLMANADTLEDLVS, HRKD…RVGV, and AHST…HREK. 2 disordered regions span residues 1276–1297 and 1323–1363; these read KKYCDSEESDIDSEEDGGYDSD and PHLQ…NVGK. The span at 1281 to 1294 shows a compositional bias: acidic residues; the sequence is SEESDIDSEEDGGY. Basic and acidic residues predominate over residues 1326–1337; sequence QQKEPSVDERQG. WD repeat units follow at residues 1420–1471, 1475–1516, 1519–1558, 1568–1606, 1608–1654, 1699–1739, 1741–1782, 1783–1822, 1895–1934, and 1940–1977; these read EHND…TLSI, SHSK…KIAS, GHNQRIFVAEFRPDSDTQFVSVGIKHVKFWTLAGRALLSK, ARMQTMLAVAFGANNLTFTGTISGDVCVWKDHILCRVVA, AHNG…RAFR, GHVD…MLNK, NLGH…GKKR, DRRCAIHDIRFSPDSRYLAVGSSENSVDFYDLTLGPTLNR, AEKADVTCACVSHSGISLVTGDDFGMVKLYDFPCPEKFAK, and GHSPHVTNIRFTSGDRHVVSAGGDDCSLFVWKCVHMPH.

Belongs to the WD repeat EMAP family.

It localises to the cytoplasm. Its subcellular location is the cytoskeleton. In terms of biological role, may modify the assembly dynamics of microtubules, such that microtubules are slightly longer, but more dynamic. This chain is Echinoderm microtubule-associated protein-like 5 (Eml5), found in Mus musculus (Mouse).